Reading from the N-terminus, the 1948-residue chain is [F-actin]-monooxygenase MICAL2 (1948 aa).

The segment at Gly-2 to Asp-494 is monooxygenase domain. FAD-binding positions include Cys-97, Glu-116 to Arg-118, Arg-123 to Asn-125, Phe-183, Tyr-298, and Asp-398. One can recognise a Calponin-homology (CH) domain in the interval Asp-516–Glu-619. A Phosphoserine modification is found at Ser-631. The Nuclear localization signal motif lies at Arg-660–Gln-681. Disordered stretches follow at residues Pro-664 to Asn-709, Ser-753 to Lys-776, and Lys-891 to Ser-923. Polar residues predominate over residues Ser-693–Asn-709. A compositionally biased stretch (pro residues) spans Ala-896 to Pro-917. The LIM zinc-binding domain occupies Asp-980 to Ser-1042. Cys-982, Cys-985, His-1003, Cys-1006, Cys-1009, Cys-1012, Cys-1032, and His-1035 together coordinate Zn(2+). Disordered regions lie at residues Gln-1045–Gly-1134, Ser-1146–Thr-1185, and Gln-1233–Ser-1298. The segment covering Ala-1050–Glu-1059 has biased composition (basic and acidic residues). Polar residues predominate over residues Gln-1233–Ala-1243. Residues Ser-1254–Pro-1271 show a composition bias toward low complexity. Residues Asp-1277–Ile-1292 are compositionally biased toward polar residues. Residues Thr-1300 to Glu-1339 are interaction with MAPK1. Disordered regions lie at residues Gln-1478 to Leu-1505, Ser-1519 to Val-1622, Gly-1672 to Lys-1726, and Ser-1739 to Ser-1767. Basic and acidic residues predominate over residues Ala-1522 to Thr-1534. Low complexity predominate over residues Lys-1570–Ser-1579. A compositionally biased stretch (polar residues) spans Pro-1580 to Ser-1591. The segment covering Gly-1672–Gly-1682 has biased composition (basic and acidic residues). Position 1677 is a phosphoserine (Ser-1677). 2 stretches are compositionally biased toward polar residues: residues Val-1698–Asp-1715 and Glu-1747–Ser-1756. The bMERB domain occupies Lys-1786–Asn-1936.

The protein belongs to the Mical family. Interacts with PLXNA4. Interacts with RAB1B. Interacts with MAPK1/ERK2. Interacts with RAB35, RAB8A, RAB10, RAB13 and RAB15 (in their GTP-bound forms); binding to RAB35 is of low affinity compared to other Rab proteins; at least in case of RAB8A may bind 2 molecules of RAB8A simultaneously through a high and a low affinity binding site, respectively. May interact with MAPK1/ERK2. FAD serves as cofactor.

It localises to the nucleus. It is found in the cytoplasm. It carries out the reaction L-methionyl-[F-actin] + NADPH + O2 + H(+) = L-methionyl-(R)-S-oxide-[F-actin] + NADP(+) + H2O. Functionally, methionine monooxygenase that promotes depolymerization of F-actin by mediating oxidation of residues 'Met-44' and 'Met-47' on actin to form methionine-sulfoxide, resulting in actin filament disassembly and preventing repolymerization. Regulates the disassembly of branched actin networks also by oxidizing ARP3B-containing ARP2/3 complexes leading to ARP3B dissociation from the network. Acts as a key regulator of the SRF signaling pathway elicited by nerve growth factor and serum: mediates oxidation and subsequent depolymerization of nuclear actin, leading to increase MKL1/MRTF-A presence in the nucleus and promote SRF:MKL1/MRTF-A-dependent gene transcription. Does not activate SRF:MKL1/MRTF-A through RhoA. The chain is [F-actin]-monooxygenase MICAL2 from Rattus norvegicus (Rat).